Here is a 362-residue protein sequence, read N- to C-terminus: Patr class I histocompatibility antigen, B-2 alpha chain (362 aa).

The N-terminal stretch at 1–24 is a signal peptide; sequence MQVTAPRTVLLLLSAALALTETWA. The interval 25-114 is alpha-1; that stretch reads GSHSMKYFYT…LRGYYNQSEA (90 aa). The Extracellular portion of the chain corresponds to 25 to 308; sequence GSHSMKYFYT…EPSSQSTIPI (284 aa). Residue Asn110 is glycosylated (N-linked (GlcNAc...) asparagine). The alpha-2 stretch occupies residues 115-206; sequence GSHIIQRMYG…ENGKETLQRA (92 aa). 2 disulfide bridges follow: Cys125–Cys188 and Cys227–Cys283. The tract at residues 207 to 298 is alpha-3; it reads DPPKTHVTHH…GLPKPLTLRW (92 aa). One can recognise an Ig-like C1-type domain in the interval 209–295; the sequence is PKTHVTHHPI…QHEGLPKPLT (87 aa). A connecting peptide region spans residues 299–308; the sequence is EPSSQSTIPI. A helical transmembrane segment spans residues 309–332; that stretch reads VGIVAGLAVLAVVVIGAVVAAVMC. Topologically, residues 333-362 are cytoplasmic; the sequence is RRKSSGGKGGSYSQAASSDSAQGSDVSLTA. Residues 336 to 362 form a disordered region; sequence SSGGKGGSYSQAASSDSAQGSDVSLTA. Over residues 343 to 362 the composition is skewed to low complexity; sequence SYSQAASSDSAQGSDVSLTA.

This sequence belongs to the MHC class I family. Heterodimer of an alpha chain and a beta chain (beta-2-microglobulin).

Its subcellular location is the membrane. Involved in the presentation of foreign antigens to the immune system. The sequence is that of Patr class I histocompatibility antigen, B-2 alpha chain from Pan troglodytes (Chimpanzee).